A 393-amino-acid polypeptide reads, in one-letter code: Aspartate aminotransferase (393 aa).

Glycine 38, tryptophan 124, and asparagine 174 together coordinate L-aspartate. Lysine 237 is subject to N6-(pyridoxal phosphate)lysine.

The protein belongs to the class-I pyridoxal-phosphate-dependent aminotransferase family. As to quaternary structure, homodimer. The cofactor is pyridoxal 5'-phosphate.

It localises to the cytoplasm. The enzyme catalyses L-aspartate + 2-oxoglutarate = oxaloacetate + L-glutamate. The protein is Aspartate aminotransferase (aspC) of Geobacillus stearothermophilus (Bacillus stearothermophilus).